The sequence spans 371 residues: Cytokine receptor-like factor 2 (371 aa).

Residues 1-22 (MGRLVLLWGAAVFLLGGWMALG) form the signal peptide. The Extracellular portion of the chain corresponds to 23–231 (QGGAAEGVQI…PTPPKPKLSK (209 aa)). Residues Asn-47 and Asn-55 are each glycosylated (N-linked (GlcNAc...) asparagine). An intrachain disulfide couples Cys-71 to Cys-84. 2 N-linked (GlcNAc...) asparagine glycosylation sites follow: Asn-101 and Asn-169. The Fibronectin type-III domain maps to 118–211 (KPSSPKHVRF…DWSEVTCWQR (94 aa)). Cys-180 and Cys-218 form a disulfide bridge. The short motif at 200-204 (PSDWS) is the WSXWS motif element. A helical transmembrane segment spans residues 232-252 (FILISSLAILLMVSLLLLSLW). Residues 253 to 371 (KLWRVKKFLI…VMNDRSYVAL (119 aa)) lie on the Cytoplasmic side of the membrane. Positions 261 to 269 (LIPSVPDPK) match the Box 1 motif motif. Over residues 322 to 336 (ESPRMLDPQTEEKEA) the composition is skewed to basic and acidic residues. Residues 322 to 347 (ESPRMLDPQTEEKEASGGSLQLPHQP) form a disordered region.

It belongs to the type I cytokine receptor family. Type 5 subfamily. As to quaternary structure, heterodimer of CRLF2 and IL7R. Expressed in heart, skeletal muscle, kidney and adult and fetal liver. Primarily expressed in dendrites and monocytes. Weakly expressed in T-cells.

It localises to the cell membrane. It is found in the secreted. Functionally, receptor for thymic stromal lymphopoietin (TSLP). Forms a functional complex with TSLP and IL7R which is capable of stimulating cell proliferation through activation of STAT3 and STAT5. Also activates JAK2. Implicated in the development of the hematopoietic system. The protein is Cytokine receptor-like factor 2 (CRLF2) of Homo sapiens (Human).